The following is a 1083-amino-acid chain: MFSFEGDFKTRPKVSLGGASRKEEKASLLHRTQEERRKREEERRRLKNAIIIQSFIRGYRDRKQQYSIQRSAFDRCATLSQSGGAFPIANGPNLTLLVRQLLFFYKQNEDSKRLIWLYQNLIKHSSLFVKQLDGSERLTCLFQIKRLMSLCCRLLQNCNDDSLNVALPMRMLEVFSSENTYLPVLQDASYVVSVIEQILHYMIHNGYYRSLYLLINSKLPSSIEYSDLSRVPIAKILLENVLKPLHFTYNSCPEGARQQVFTAFTEEFLAAPFTDQIFHFIIPALADAQTVFPYEPFLNALLLIESRCSRKSGGAPWLFYFVLTVGENYLGALSEEGLLVYLRVLQTFLSQLPVSPASASCHDSASDSEEESEEADKPSSPEDGRLSVSYITEECLKKLDTKQQTNTLLNLVWRDSASEEVFTTMASVCHTLMVQHRMMVPKVRLLYSLAFNARFLRHLWFLISSMSTRMITGSMVPLLQVISRGSPMSFEDSSRIIPLFYLFSSLFSHSLISIHDNEFFGDPIEVVGQRQSSMMPFTLEELIMLSRCLRDACLGIIKLAYPETKPEVREEYITAFQSIGVTTSSEMQQCIQMEQKRWIQLFKVITNLVKMLKSRDTRRNFCPPNHWLSEQEDIKADKVTQLYVPASRHVWRFRRMGRIGPLQSTLDVGLESPPLSVSEERQLAVLTELPFVVPFEERVKIFQRLIYADKQEVQGDGPFLDGINVTIRRNYIYEDAYDKLSPENEPDLKKRIRVHLLNAHGLDEAGIDGGGIFREFLNELLKSGFNPNQGFFKTTNEGLLYPNPAAQMLVGDSFARHYYFLGRMLGKALYENMLVELPFAGFFLSKLLGTSADVDIHHLASLDPEVYKNLLFLKSYEDDVEELGLNFTVVNNDLGEAQVVELKFGGKDIPVTSANRIAYIHLVADYRLNRQIRQHCLAFRQGLANVVSLEWLRMFDQQEIQVLISGAQVPISLEDLKSFTNYSGGYSADHPVIKVFWRVVEGFTDEEKRKLLKFVTSCSRPPLLGFKELYPAFCIHNGGSDLERLPTASTCMNLLKLPEFYDETLLRSKLLYAIECAAGFELS.

Basic and acidic residues-rich tracts occupy residues 1–10 (MFSFEGDFKT) and 20–40 (SRKE…RKRE). The segment at 1 to 40 (MFSFEGDFKTRPKVSLGGASRKEEKASLLHRTQEERRKRE) is disordered. Residues 1–60 (MFSFEGDFKTRPKVSLGGASRKEEKASLLHRTQEERRKREEERRRLKNAIIIQSFIRGYR) are cis-determinant of acceptor ubiquitin-binding. Residues 45-74 (RLKNAIIIQSFIRGYRDRKQQYSIQRSAFD) enclose the IQ domain. Positions 355-385 (SPASASCHDSASDSEEESEEADKPSSPEDGR) are disordered. The span at 375 to 385 (ADKPSSPEDGR) shows a compositional bias: basic and acidic residues. Positions 744–1083 (NEPDLKKRIR…IECAAGFELS (340 aa)) constitute an HECT domain. Residue K903 forms a Glycyl lysine isopeptide (Lys-Gly) (interchain with G-Cter in ubiquitin); by autocatalysis linkage. C1051 serves as the catalytic Glycyl thioester intermediate.

It belongs to the UBE3C family. In terms of assembly, interacts with 26S proteasomes. Interacts (via the HECT domain) with UBE2D1 and, less efficiently, with UBE2L3. In terms of processing, autoubiquitinated; promoting its own degradation. Highly expressed in skeletal muscle. Detected at much lower levels in kidney and pancreas.

The enzyme catalyses S-ubiquitinyl-[E2 ubiquitin-conjugating enzyme]-L-cysteine + [acceptor protein]-L-lysine = [E2 ubiquitin-conjugating enzyme]-L-cysteine + N(6)-ubiquitinyl-[acceptor protein]-L-lysine.. The protein operates within protein modification; protein ubiquitination. Functionally, E3 ubiquitin-protein ligase that specifically catalyzes 'Lys-29'- and 'Lys-48'-linked polyubiquitin chains. Accepts ubiquitin from the E2 ubiquitin-conjugating enzyme UBE2D1 in the form of a thioester and then directly transfers the ubiquitin to targeted substrates. Associates with the proteasome and promotes elongation of ubiquitin chains on substrates bound to the 26S proteasome. Also catalyzes 'Lys-29'- and 'Lys-48'-linked ubiquitination of 26S proteasome subunit ADRM1/RPN13 in response to proteotoxic stress, impairing the ability of the proteasome to bind and degrade ubiquitin-conjugated proteins. Acts as a negative regulator of autophagy by mediating 'Lys-29'- and 'Lys-48'-linked ubiquitination of PIK3C3/VPS34, promoting its degradation. Can assemble unanchored poly-ubiquitin chains in either 'Lys-29'- or 'Lys-48'-linked polyubiquitin chains; with some preference for 'Lys-48' linkages. Acts as a negative regulator of type I interferon by mediating 'Lys-48'-linked ubiquitination of IRF3 and IRF7, leading to their degradation by the proteasome. Catalyzes ubiquitination and degradation of CAND2. This chain is Ubiquitin-protein ligase E3C, found in Homo sapiens (Human).